A 209-amino-acid chain; its full sequence is Guanylate kinase (209 aa).

Residues 7–185 form the Guanylate kinase-like domain; the sequence is GNLYIVAAPS…AAMELQSIVI (179 aa). 14-21 lines the ATP pocket; it reads APSGGGKT.

Belongs to the guanylate kinase family.

The protein resides in the cytoplasm. It catalyses the reaction GMP + ATP = GDP + ADP. Functionally, essential for recycling GMP and indirectly, cGMP. The sequence is that of Guanylate kinase from Legionella pneumophila (strain Paris).